Consider the following 205-residue polypeptide: Small ribosomal subunit protein uS4 (205 aa).

Positions 94-157 (SRLDTVVYRM…QQIPLIQESI (64 aa)) constitute an S4 RNA-binding domain.

This sequence belongs to the universal ribosomal protein uS4 family. As to quaternary structure, part of the 30S ribosomal subunit. Contacts protein S5. The interaction surface between S4 and S5 is involved in control of translational fidelity.

In terms of biological role, one of the primary rRNA binding proteins, it binds directly to 16S rRNA where it nucleates assembly of the body of the 30S subunit. Its function is as follows. With S5 and S12 plays an important role in translational accuracy. This Rickettsia prowazekii (strain Madrid E) protein is Small ribosomal subunit protein uS4.